Here is a 139-residue protein sequence, read N- to C-terminus: Holo-[acyl-carrier-protein] synthase (139 aa).

Mg(2+)-binding residues include Asp8 and Glu57.

Belongs to the P-Pant transferase superfamily. AcpS family. Requires Mg(2+) as cofactor.

It is found in the cytoplasm. It catalyses the reaction apo-[ACP] + CoA = holo-[ACP] + adenosine 3',5'-bisphosphate + H(+). In terms of biological role, transfers the 4'-phosphopantetheine moiety from coenzyme A to a Ser of acyl-carrier-protein. This is Holo-[acyl-carrier-protein] synthase from Sinorhizobium medicae (strain WSM419) (Ensifer medicae).